The primary structure comprises 179 residues: Large ribosomal subunit protein uL6 (179 aa).

Belongs to the universal ribosomal protein uL6 family. Part of the 50S ribosomal subunit.

In terms of biological role, this protein binds to the 23S rRNA, and is important in its secondary structure. It is located near the subunit interface in the base of the L7/L12 stalk, and near the tRNA binding site of the peptidyltransferase center. In Prochlorococcus marinus (strain MIT 9313), this protein is Large ribosomal subunit protein uL6.